A 278-amino-acid polypeptide reads, in one-letter code: Ribosomal RNA small subunit methyltransferase A (278 aa).

Residues Asn-25, Leu-27, Gly-52, Glu-73, Asp-97, and Asn-117 each contribute to the S-adenosyl-L-methionine site.

It belongs to the class I-like SAM-binding methyltransferase superfamily. rRNA adenine N(6)-methyltransferase family. RsmA subfamily.

It is found in the cytoplasm. It carries out the reaction adenosine(1518)/adenosine(1519) in 16S rRNA + 4 S-adenosyl-L-methionine = N(6)-dimethyladenosine(1518)/N(6)-dimethyladenosine(1519) in 16S rRNA + 4 S-adenosyl-L-homocysteine + 4 H(+). Its function is as follows. Specifically dimethylates two adjacent adenosines (A1518 and A1519) in the loop of a conserved hairpin near the 3'-end of 16S rRNA in the 30S particle. May play a critical role in biogenesis of 30S subunits. In Desulfitobacterium hafniense (strain DSM 10664 / DCB-2), this protein is Ribosomal RNA small subunit methyltransferase A.